Here is a 396-residue protein sequence, read N- to C-terminus: Flavohemoprotein (396 aa).

The region spanning 1 to 136 is the Globin domain; sequence MLDAQTIATV…LANVFIHREA (136 aa). Histidine 85 provides a ligand contact to heme b. Residues tyrosine 95 and glutamate 135 each act as charge relay system in the active site. Positions 147-396 are reductase; it reads GGWEGTRPFR…YECFGPHKVL (250 aa). The region spanning 150-255 is the FAD-binding FR-type domain; sequence EGTRPFRIVA…AAPAGDFFMN (106 aa). Residues tyrosine 188 and 204–207 contribute to the FAD site; that span reads RQYS. 268 to 273 provides a ligand contact to NADP(+); sequence GVGQTP. 389-392 is a binding site for FAD; it reads CFGP.

It belongs to the globin family. Two-domain flavohemoproteins subfamily. In the C-terminal section; belongs to the flavoprotein pyridine nucleotide cytochrome reductase family. Monomer. Heme b serves as cofactor. The cofactor is FAD.

The enzyme catalyses 2 nitric oxide + NADPH + 2 O2 = 2 nitrate + NADP(+) + H(+). It catalyses the reaction 2 nitric oxide + NADH + 2 O2 = 2 nitrate + NAD(+) + H(+). Its function is as follows. Is involved in NO detoxification in an aerobic process, termed nitric oxide dioxygenase (NOD) reaction that utilizes O(2) and NAD(P)H to convert NO to nitrate, which protects the bacterium from various noxious nitrogen compounds. Therefore, plays a central role in the inducible response to nitrosative stress. This Salmonella typhimurium (strain LT2 / SGSC1412 / ATCC 700720) protein is Flavohemoprotein (hmp).